Reading from the N-terminus, the 213-residue chain is N-(5'-phosphoribosyl)anthranilate isomerase (213 aa).

It belongs to the TrpF family.

The catalysed reaction is N-(5-phospho-beta-D-ribosyl)anthranilate = 1-(2-carboxyphenylamino)-1-deoxy-D-ribulose 5-phosphate. It participates in amino-acid biosynthesis; L-tryptophan biosynthesis; L-tryptophan from chorismate: step 3/5. In Caulobacter sp. (strain K31), this protein is N-(5'-phosphoribosyl)anthranilate isomerase.